The sequence spans 311 residues: Malate dehydrogenase (311 aa).

NAD(+)-binding positions include 7 to 13 and aspartate 34; that span reads GAAGGIG. Substrate contacts are provided by arginine 81 and arginine 87. Residues asparagine 94 and 117-119 contribute to the NAD(+) site; that span reads ITN. Positions 119 and 153 each coordinate substrate. Histidine 177 acts as the Proton acceptor in catalysis. Methionine 227 provides a ligand contact to NAD(+).

This sequence belongs to the LDH/MDH superfamily. MDH type 1 family. In terms of assembly, homodimer.

The catalysed reaction is (S)-malate + NAD(+) = oxaloacetate + NADH + H(+). Its function is as follows. Catalyzes the reversible oxidation of malate to oxaloacetate. The polypeptide is Malate dehydrogenase (Shewanella sp. (strain ANA-3)).